We begin with the raw amino-acid sequence, 42 residues long: Cytochrome b559 subunit beta (42 aa).

A helical membrane pass occupies residues 17–33 (WLAIHGLAVPTVFFLGA). H21 lines the heme pocket.

Belongs to the PsbE/PsbF family. As to quaternary structure, heterodimer of an alpha subunit and a beta subunit. PSII is composed of 1 copy each of membrane proteins PsbA, PsbB, PsbC, PsbD, PsbE, PsbF, PsbH, PsbI, PsbJ, PsbK, PsbL, PsbM, PsbT, PsbX, PsbY, PsbZ, Psb30/Ycf12, at least 3 peripheral proteins of the oxygen-evolving complex and a large number of cofactors. It forms dimeric complexes. Requires heme b as cofactor.

It is found in the plastid. The protein localises to the chloroplast thylakoid membrane. This b-type cytochrome is tightly associated with the reaction center of photosystem II (PSII). PSII is a light-driven water:plastoquinone oxidoreductase that uses light energy to abstract electrons from H(2)O, generating O(2) and a proton gradient subsequently used for ATP formation. It consists of a core antenna complex that captures photons, and an electron transfer chain that converts photonic excitation into a charge separation. The sequence is that of Cytochrome b559 subunit beta from Guillardia theta (Cryptophyte).